The following is a 326-amino-acid chain: DnaJ homolog subfamily B member 6 (326 aa).

One can recognise a J domain in the interval 3 to 69; that stretch reads DYYEVLGVQK…KKRDIYDRFG (67 aa). The tract at residues 249-326 is disordered; the sequence is ALPFQPTNTR…KKKKSTKGSY (78 aa). Serine 277 is modified (phosphoserine).

In terms of assembly, homooligomer.

Its subcellular location is the cytoplasm. It localises to the perinuclear region. It is found in the nucleus. Functionally, has a stimulatory effect on the ATPase activity of HSP70 in a dose-dependent and time-dependent manner and hence acts as a co-chaperone of HSP70. Plays an indispensable role in the organization of KRT8/KRT18 filaments. Acts as an endogenous molecular chaperone for neuronal proteins including huntingtin. Suppresses aggregation and toxicity of polyglutamine-containing, aggregation-prone proteins. Also reduces cellular toxicity and caspase-3 activity. This Gallus gallus (Chicken) protein is DnaJ homolog subfamily B member 6.